We begin with the raw amino-acid sequence, 419 residues long: MGTQKPRILPWLISQLNQGQLEGVAWLDEGHTRFRIPWKHGLRQDAQQEDFGIFQAWAEASGAYTPGKDKPDLPTWKRNFRSALNRKEALRLAEDHSKDPHDPHKIYEFVTSGVGDFPEPDTSLDLSGRYSTSDTHEDSLDKLLSGMDLASDAGPQSLTLALEQPPQLSLSPSVDAPASCPNLGVRENPLKQLLANDDEWEFQVTVFYRGCQVFQQTVCSPGGLRLVGSEAEDGTLAGQPVRLPDPAASLTDRGVADYVRRVLSCLGGGLALWRAGQWLWAQRLGHCHVYWAMGEELIPDSGHKPDGEVPKDREGGVFDLGPFIEDLIAFIEGSRRSPRYTLWFCMGQSWPQDEPWVKRLVMVKVVPMCLRALVDMARDGGASSLENTVDLHISNSHPLSLTSDQYKACLRDLVEDMDF.

Threonine 3 carries the phosphothreonine modification. The segment at residues 5 to 111 (KPRILPWLIS…DPHKIYEFVT (107 aa)) is a DNA-binding region (IRF tryptophan pentad repeat). Serine 14 bears the Phosphoserine mark. Threonine 75 bears the Phosphothreonine mark. Serine 97 and serine 123 each carry phosphoserine. Residues 118–137 (PEPDTSLDLSGRYSTSDTHE) are disordered. Residues 140 to 419 (LDKLLSGMDL…LRDLVEDMDF (280 aa)) form a mediates interaction with ZDHHC11 region. Lysine 191 participates in a covalent cross-link: Glycyl lysine isopeptide (Lys-Gly) (interchain with G-Cter in ISG15). The interval 198–358 (DEWEFQVTVF…SWPQDEPWVK (161 aa)) is interaction with HERC5. Threonine 235 and threonine 251 each carry phosphothreonine. A disulfide bridge connects residues cysteine 265 and cysteine 287. Glycyl lysine isopeptide (Lys-Gly) (interchain with G-Cter in ISG15) cross-links involve residues lysine 358 and lysine 364. An N6-acetyllysine modification is found at lysine 364. Phosphoserine is present on serine 383. Serine 384 is modified (diphosphoserine). Serine 384 bears the Phosphoserine; by TBK1 mark. At serine 394 the chain carries Phosphoserine; by IKKE. Position 396 is a phosphoserine (serine 396). Position 402 is a phosphothreonine (threonine 402).

It belongs to the IRF family. Monomer. Homodimer; phosphorylation-induced. Interacts (when phosphorylated) with CREBBP. Interacts with MAVS (via phosphorylated pLxIS motif). Interacts with TICAM1 (via phosphorylated pLxIS motif). Interacts with STING1 (via phosphorylated pLxIS motif). Interacts with IKBKE and TBK1. Interacts with TICAM2. Interacts with RBCK1. Interacts with HERC5. Interacts with DDX3X; the interaction allows the phosphorylation and activation of IRF3 by IKBKE. Interacts with TRIM21 and ULK1, in the presence of TRIM21; this interaction leads to IRF3 degradation by autophagy. Interacts with RIOK3; RIOK3 probably mediates the interaction of TBK1 with IRF3. Interacts with ILRUN; the interaction inhibits IRF3 binding to its DNA consensus sequence. Interacts with LYAR; this interaction impairs IRF3 DNA-binding activity. Interacts with TRAF3. Interacts with ZDHHC11; ZDHHC11 recruits IRF3 to STING1 upon DNA virus infection and thereby promotes IRF3 activation. Interacts with HSP90AA1; the interaction mediates IRF3 association with TOMM70. Interacts with BCL2; the interaction decreases upon Sendai virus infection. Interacts with BAX; the interaction is direct, increases upon virus infection and mediates the formation of the apoptosis complex TOMM70:HSP90AA1:IRF3:BAX. Interacts with DDX56. Interacts with NBR1. In terms of assembly, (Microbial infection) Interacts with Porcine epidemic diarrhea virus E protein; this interaction prevents IRF3 translocation to the nucleus and thereby prevents type I interferon production. As to quaternary structure, (Microbial infection) Interacts with African swine fever virus (ASFV) P14.5/E120R; this interaction interferes with the recruitment of IRF3 to TBK1, which in turn suppresses IRF3 phosphorylation, decreasing interferon production via the cGAS/STING pathway. (Microbial infection) Interacts with African swine fever virus (ASFV) MGF360-14L; this interaction mediates degradation of IRF3 through TRIM21 and ubiquitin-meditated proteolysis. In terms of assembly, (Microbial infection) Interacts with African swine fever virus (ASFV) E301R; this interaction inhibits nuclear translocation of IRF3 to the nucleus. As to quaternary structure, (Microbial infection) Interacts with African swine fever virus (ASFV) minor capsid protein M1249L; this interaction mediates IRF3 degradation. Post-translationally, constitutively phosphorylated on many Ser/Thr residues. Activated following phosphorylation by TBK1 and IKBKE. Innate adapter proteins, such as MAVS, STING1 or TICAM1, are first activated by viral RNA, cytosolic DNA, and bacterial lipopolysaccharide (LPS), respectively, leading to activation of the kinases TBK1 and IKBKE. These kinases then phosphorylate the adapter proteins on the pLxIS motif, leading to recruitment of IRF3, thereby licensing IRF3 for phosphorylation by TBK1. Phosphorylation at Ser-384 is followed by pyrophosphorylation at the same residue, promoting phosphorylation at Ser-394. Phosphorylated IRF3 dissociates from the adapter proteins, dimerizes, and then enters the nucleus to induce IFNs. In terms of processing, pyrophosphorylated by UAP1 following phosphorylation at Ser-384 by TBK1. Pyrophosphorylation promotes subsequent phosphorylation at Ser-394, leading to homodimerization of IRF3. Acetylation at Lys-364 by KAT8 inhibits recruimtent to promoters and transcription factor activity. Acetylation by KAT8 is promoted by phosphorylation at Ser-394. Post-translationally, ubiquitinated; ubiquitination involves RBCK1 leading to proteasomal degradation. Polyubiquitinated; ubiquitination involves TRIM21 leading to proteasomal degradation. Ubiquitinated by UBE3C, leading to its degradation. Deubiquitinated by USP5 on both 'Lys-48'-linked unanchored and 'Lys-63'-linked anchored polyubiquitin, leading to inhibition of antiviral innate immunity. In terms of processing, ISGylated by HERC5 resulting in sustained IRF3 activation and in the inhibition of IRF3 ubiquitination by disrupting PIN1 binding. The phosphorylation state of IRF3 does not alter ISGylation. (Microbial infection) Phosphorylated by pseudorabies virus protein kinase UL13; leading to decreased IRF3 binding to the IRF3-responsive promoters and downstream ISG expression. Post-translationally, proteolytically cleaved by apoptotic caspases during apoptosis, leading to its inactivation. Cleavage by CASP3 during virus-induced apoptosis inactivates it, preventing cytokine overproduction.

It localises to the cytoplasm. The protein resides in the nucleus. It is found in the mitochondrion. In the absence of viral infection, maintained as a monomer in an autoinhibited state. Phosphorylation by TBK1 and IKBKE disrupts this autoinhibition leading to the liberation of the DNA-binding and dimerization activities and its nuclear localization where it can activate type I IFN and ISG genes. Phosphorylation and activation follow the following steps: innate adapter proteins, such as MAVS, STING1 or TICAM1, are first activated by viral RNA, cytosolic DNA and bacterial lipopolysaccharide (LPS), respectively, leading to activation of the kinases TBK1 and IKBKE. These kinases then phosphorylate the adapter proteins on their pLxIS motif, leading to recruitment of IRF3, thereby licensing IRF3 for phosphorylation by TBK1. Phosphorylated IRF3 dissociates from the adapter proteins, dimerizes, and then enters the nucleus to induce IFNs. In terms of biological role, key transcriptional regulator of type I interferon (IFN)-dependent immune responses which plays a critical role in the innate immune response against DNA and RNA viruses. Regulates the transcription of type I IFN genes (IFN-alpha and IFN-beta) and IFN-stimulated genes (ISG) by binding to an interferon-stimulated response element (ISRE) in their promoters. Acts as a more potent activator of the IFN-beta (IFNB) gene than the IFN-alpha (IFNA) gene and plays a critical role in both the early and late phases of the IFNA/B gene induction. Found in an inactive form in the cytoplasm of uninfected cells and following viral infection, double-stranded RNA (dsRNA), or toll-like receptor (TLR) signaling, is phosphorylated by IKBKE and TBK1 kinases. This induces a conformational change, leading to its dimerization and nuclear localization and association with CREB binding protein (CREBBP) to form dsRNA-activated factor 1 (DRAF1), a complex which activates the transcription of the type I IFN and ISG genes. Can activate distinct gene expression programs in macrophages and can induce significant apoptosis in primary macrophages. The chain is Interferon regulatory factor 3 (IRF3) from Sus scrofa (Pig).